Reading from the N-terminus, the 273-residue chain is DNA repair protein RecO (273 aa).

It belongs to the RecO family.

Involved in DNA repair and RecF pathway recombination. This Mycolicibacterium gilvum (strain PYR-GCK) (Mycobacterium gilvum (strain PYR-GCK)) protein is DNA repair protein RecO.